We begin with the raw amino-acid sequence, 429 residues long: Enolase (429 aa).

Q162 contributes to the (2R)-2-phosphoglycerate binding site. Residue E204 is the Proton donor of the active site. Mg(2+)-binding residues include D241, E283, and D310. Residues K335, R364, S365, and K386 each contribute to the (2R)-2-phosphoglycerate site. The active-site Proton acceptor is the K335.

It belongs to the enolase family. Requires Mg(2+) as cofactor.

It is found in the cytoplasm. The protein localises to the secreted. Its subcellular location is the cell surface. It carries out the reaction (2R)-2-phosphoglycerate = phosphoenolpyruvate + H2O. It functions in the pathway carbohydrate degradation; glycolysis; pyruvate from D-glyceraldehyde 3-phosphate: step 4/5. Catalyzes the reversible conversion of 2-phosphoglycerate (2-PG) into phosphoenolpyruvate (PEP). It is essential for the degradation of carbohydrates via glycolysis. This Mycolicibacterium gilvum (strain PYR-GCK) (Mycobacterium gilvum (strain PYR-GCK)) protein is Enolase.